The primary structure comprises 350 residues: Probable arabinogalactan endo-beta-1,4-galactanase A (350 aa).

Residues 1–16 (MIYPLLLSALPLLSSA) form the signal peptide. Asparagine 128 carries N-linked (GlcNAc...) asparagine glycosylation. The Proton donor role is filled by glutamate 152. The active-site Nucleophile is the glutamate 262.

It belongs to the glycosyl hydrolase 53 family.

Its subcellular location is the secreted. The enzyme catalyses The enzyme specifically hydrolyzes (1-&gt;4)-beta-D-galactosidic linkages in type I arabinogalactans.. Functionally, endogalactanase involved in the degradation of plant cell wall polysaccharides, and more particularly of hairy regions of pectin. The chain is Probable arabinogalactan endo-beta-1,4-galactanase A (galA) from Aspergillus tubingensis.